Consider the following 512-residue polypeptide: Envelope glycoprotein (512 aa).

An N-terminal signal peptide occupies residues 1–15 (MFLQTALLLLSLGVA). N-linked (GlcNAc...) asparagine; by host glycans are attached at residues N185, N263, N289, N378, and N416. Residues 479 to 502 (GQLGGLLYGNIGVYLLIAFAFVLL) traverse the membrane as a helical segment.

The protein localises to the virion membrane. Functionally, attaches the virus to host cellular receptor and later induces fusion of virion with host membrane. The sequence is that of Envelope glycoprotein from Thogoto virus (isolate SiAr 126) (Tho).